A 346-amino-acid polypeptide reads, in one-letter code: Sensor protein kinase GraS (346 aa).

Transmembrane regions (helical) follow at residues 15 to 35 (MNWI…SLID) and 43 to 63 (LFYI…LTYF). Residues 126-332 (EFVHDIKTPV…TVRLIFPLQN (207 aa)) enclose the Histidine kinase domain.

As to quaternary structure, interacts with GraX.

Its subcellular location is the cell membrane. It carries out the reaction ATP + protein L-histidine = ADP + protein N-phospho-L-histidine.. Its function is as follows. Member of the two-component regulatory system GraR/GraS involved in resistance against cationic antimicrobial peptides (CAMPs). Functions as a sensor protein kinase which phosphorylates GraR through the auxiliary protein GraX. In turn, GraR up-regulates many genes such as adhesins, exoproteins, transporters, toxins, and proteins involved in cell wall synthesis. Down-regulates the expression of many genes involved in RNA and amino acid synthesis or glycolysis. This Staphylococcus aureus (strain bovine RF122 / ET3-1) protein is Sensor protein kinase GraS (graS).